A 144-amino-acid polypeptide reads, in one-letter code: Mating factor alpha (144 aa).

The segment at residues 1-19 (MRFPSIFTAVLFAASSALA) is a signal peptide (or 20).

The active factor is excreted into the culture medium by haploid cells of the alpha mating type and acts on cells of the opposite mating type (type A). It mediates the conjugation process between the two types by inhibiting the initiation of DNA synthesis in type a cells and synchronizing them with type alpha. This chain is Mating factor alpha, found in Saccharomyces uvarum (Yeast).